Reading from the N-terminus, the 263-residue chain is uncharacterized protein (263 aa).

An N-terminal signal peptide occupies residues 1 to 22 (MEYLKRLALLISVIILTIFIMG). A lipid anchor (N-palmitoyl cysteine) is attached at cysteine 23. Cysteine 23 carries the S-diacylglycerol cysteine lipid modification.

Belongs to the staphylococcal tandem lipoprotein family.

The protein resides in the cell membrane. This is an uncharacterized protein from Staphylococcus aureus (strain USA300).